The following is a 592-amino-acid chain: Inactive metallocarboxypeptidase ecm14 (592 aa).

The first 22 residues, 1–22 (MYRQDHVFVVLCAVLLAGQVTA), serve as a signal peptide directing secretion. Residues 23-175 (VPAGTGINPH…AIYESRYPTR (153 aa)) constitute a propeptide that is removed on maturation. In terms of domain architecture, Peptidase M14 spans 203–524 (HYQPFNVILQ…NSVLVLGHFL (322 aa)). H267 and E270 together coordinate Zn(2+). Substrate is bound by residues 267-270 (HARE), R325, and 342-343 (DR). The cysteines at positions 336 and 359 are disulfide-linked. N383 carries an N-linked (GlcNAc...) asparagine glycan. Zn(2+) is bound at residue H399. Position 400–401 (400–401 (SY)) interacts with substrate. N-linked (GlcNAc...) asparagine glycosylation occurs at N548.

This sequence belongs to the peptidase M14 family. Zn(2+) serves as cofactor.

It localises to the vacuole. It is found in the secreted. Its function is as follows. Inactive carboxypeptidase that may play a role in cell wall organization and biogenesis. This chain is Inactive metallocarboxypeptidase ecm14 (ecm14), found in Talaromyces stipitatus (strain ATCC 10500 / CBS 375.48 / QM 6759 / NRRL 1006) (Penicillium stipitatum).